Reading from the N-terminus, the 241-residue chain is RAD9, HUS1, RAD1-interacting nuclear orphan protein 1 (241 aa).

The span at 1–10 (MPPRKKRRQA) shows a compositional bias: basic residues. The interval 1 to 27 (MPPRKKRRQAAQKPQLLFHQQPLEAPK) is disordered. The RAD1-binding motif motif lies at 56–62 (SWVSPQF). Disordered regions lie at residues 68–134 (SWFP…PLVP) and 157–204 (IPPD…LVTD). Basic residues predominate over residues 72–87 (GKRKHHHRDHARRSSR). Over residues 100–110 (ETPQSSASSAT) the composition is skewed to polar residues. The D-box motif lies at 129-136 (GRPLVPML). Positions 177 to 181 (LRENS) match the KEN box motif. A compositionally biased stretch (polar residues) spans 181–193 (SLPSCSLHTSTPK).

As to quaternary structure, interacts (when phosphorylated by PLK1) with POLQ; promoting POLQ recruitment to DNA damage sites. Interacts with RAD1; interaction is direct and promotes association with the 9-1-1 (RAD9-RAD1-HUS1) complex. Interacts with RAD18. Interacts with TOPBP1. Interacts with UBE2N. Phosphorylated by PLK1, promoting interaction with polymerase theta (POLQ). Post-translationally, ubiquitinated and degraded by the APC/C complex upon mitotic exit.

It is found in the nucleus. The protein resides in the chromosome. Involved in microhomology-mediated end-joining (MMEJ) DNA repair by promoting recruitment of polymerase theta (POLQ) to DNA damage sites during mitosis. MMEJ is an alternative non-homologous end-joining (NHEJ) machinery that takes place during mitosis to repair double-strand breaks in DNA that originate in S-phase. Accumulates in M-phase; following phosphorylation by PLK1, interacts with POLQ, enabling its recruitment to double-strand breaks for subsequent repair. Also involved in the DNA damage response (DDR) signaling in response to genotoxic stresses such as ionizing radiation (IR) during the S phase. Recruited to sites of DNA damage through interaction with the 9-1-1 cell-cycle checkpoint response complex and TOPBP1 in a ATR-dependent manner. Required for the progression of the G1 to S phase transition. Plays a role in the stimulation of CHEK1 phosphorylation. This Bos taurus (Bovine) protein is RAD9, HUS1, RAD1-interacting nuclear orphan protein 1 (RHNO1).